The following is a 291-amino-acid chain: Phosphate import ATP-binding protein PstB (291 aa).

Positions 45-286 (YSTQNLDLWY…PADKQTEDYI (242 aa)) constitute an ABC transporter domain. ATP is bound at residue 77–84 (GPSGCGKS).

Belongs to the ABC transporter superfamily. Phosphate importer (TC 3.A.1.7) family. In terms of assembly, the complex is composed of two ATP-binding proteins (PstB), two transmembrane proteins (PstC and PstA) and a solute-binding protein (PstS).

It localises to the cell membrane. The enzyme catalyses phosphate(out) + ATP + H2O = ADP + 2 phosphate(in) + H(+). Its function is as follows. Part of the ABC transporter complex PstSACB involved in phosphate import. Responsible for energy coupling to the transport system. The polypeptide is Phosphate import ATP-binding protein PstB (Staphylococcus epidermidis (strain ATCC 12228 / FDA PCI 1200)).